A 319-amino-acid polypeptide reads, in one-letter code: ATP-dependent 6-phosphofructokinase (319 aa).

Gly-11 contacts ATP. 21–25 (RAVVR) provides a ligand contact to ADP. ATP contacts are provided by residues 72-73 (RS) and 102-105 (GDGS). A Mg(2+)-binding site is contributed by Asp-103. Substrate is bound at residue 125-127 (TID). Asp-127 serves as the catalytic Proton acceptor. Arg-154 contributes to the ADP binding site. Residues Arg-162 and 169 to 171 (MGR) contribute to the substrate site. Residues 185-187 (GAE), Arg-211, and 213-215 (KKH) contribute to the ADP site. Substrate-binding positions include Glu-222, Arg-243, and 249-252 (HIQR).

The protein belongs to the phosphofructokinase type A (PFKA) family. ATP-dependent PFK group I subfamily. Prokaryotic clade 'B1' sub-subfamily. Homotetramer. The cofactor is Mg(2+).

It is found in the cytoplasm. The enzyme catalyses beta-D-fructose 6-phosphate + ATP = beta-D-fructose 1,6-bisphosphate + ADP + H(+). Its pathway is carbohydrate degradation; glycolysis; D-glyceraldehyde 3-phosphate and glycerone phosphate from D-glucose: step 3/4. Allosterically activated by ADP and other diphosphonucleosides, and allosterically inhibited by phosphoenolpyruvate. Its function is as follows. Catalyzes the phosphorylation of D-fructose 6-phosphate to fructose 1,6-bisphosphate by ATP, the first committing step of glycolysis. This chain is ATP-dependent 6-phosphofructokinase, found in Oceanobacillus iheyensis (strain DSM 14371 / CIP 107618 / JCM 11309 / KCTC 3954 / HTE831).